Consider the following 270-residue polypeptide: Regulatory protein RecX (270 aa).

The protein belongs to the RecX family.

The protein resides in the cytoplasm. Modulates RecA activity. The sequence is that of Regulatory protein RecX from Bacillus anthracis (strain A0248).